A 540-amino-acid chain; its full sequence is Glucose-6-phosphate isomerase (540 aa).

Catalysis depends on glutamate 346, which acts as the Proton donor. Residues histidine 377 and lysine 505 contribute to the active site.

It belongs to the GPI family.

It is found in the cytoplasm. It carries out the reaction alpha-D-glucose 6-phosphate = beta-D-fructose 6-phosphate. It functions in the pathway carbohydrate biosynthesis; gluconeogenesis. The protein operates within carbohydrate degradation; glycolysis; D-glyceraldehyde 3-phosphate and glycerone phosphate from D-glucose: step 2/4. Its function is as follows. Catalyzes the reversible isomerization of glucose-6-phosphate to fructose-6-phosphate. This is Glucose-6-phosphate isomerase from Francisella tularensis subsp. mediasiatica (strain FSC147).